Reading from the N-terminus, the 681-residue chain is Peroxisomal acyl-coenzyme A oxidase 2 (681 aa).

Phosphoserine is present on residues serine 3 and serine 9. 6 positions are modified to N6-succinyllysine: lysine 66, lysine 137, lysine 303, lysine 453, lysine 561, and lysine 667. Residues 679–681 carry the Microbody targeting signal motif; that stretch reads HKM.

This sequence belongs to the acyl-CoA oxidase family. In terms of assembly, homodimer. The cofactor is FAD. In terms of tissue distribution, most abundant in liver. Also expressed in kidney. Not present in any other tissues tested.

It is found in the peroxisome. The catalysed reaction is (25R)-3alpha,7alpha,12alpha-trihydroxy-5beta-cholestan-26-oyl-CoA + A + H2O = (24R,25R)-3alpha,7alpha,12alpha,24-tetrahydroxy-5beta-cholestan-26-oyl-CoA + AH2. It catalyses the reaction (25S)-3alpha,7alpha,12alpha-trihydroxy-5beta-cholestan-26-oyl-CoA + O2 = (24E)-3alpha,7alpha,12alpha-trihydroxy-5beta-cholest-24-en-26-oyl-CoA + H2O2. Functionally, oxidizes the CoA esters of the bile acid intermediates di- and tri-hydroxycoprostanic acids. Capable of oxidizing short as well as long chain 2-methyl branched fatty acids. The chain is Peroxisomal acyl-coenzyme A oxidase 2 from Rattus norvegicus (Rat).